Here is a 618-residue protein sequence, read N- to C-terminus: Leucine aminopeptidase 2 (618 aa).

A peptide is bound by residues 139–141 and 271–276; these read QCQ and PYGGME. His-300 is a Zn(2+) binding site. The Proton acceptor role is filled by Glu-301. Zn(2+)-binding residues include His-304 and Glu-323. Residue Tyr-388 is the Proton donor of the active site.

This sequence belongs to the peptidase M1 family. It depends on Zn(2+) as a cofactor.

It localises to the cytoplasm. The protein resides in the nucleus. It catalyses the reaction an epoxide + H2O = an ethanediol. Its function is as follows. Aminopeptidase that preferentially cleaves di- and tripeptides. Also has low epoxide hydrolase activity (in vitro). Can hydrolyze the epoxide leukotriene LTA(4) but it forms preferentially 5,6-dihydroxy-7,9,11,14-eicosatetraenoic acid rather than the cytokine leukotriene B(4) as the product compared to the homologous mammalian enzyme (in vitro). In Aspergillus niger (strain ATCC MYA-4892 / CBS 513.88 / FGSC A1513), this protein is Leucine aminopeptidase 2.